Consider the following 135-residue polypeptide: MGLTSQLIPALVCLLVCTSHFVHGHKCDITLEEIIKTLNILTSRKNSCMELPVADVFAAPKNATEKETFCRAGIELRRIYRSHMCLNKFLGGLDRNLSSLASKTCSVNEAKTSTSTLRDLLERLKTIMREKYSKC.

Positions 1 to 24 (MGLTSQLIPALVCLLVCTSHFVHG) are cleaved as a signal peptide. Intrachain disulfides connect Cys-48-Cys-85 and Cys-70-Cys-105. Asn-62 and Asn-96 each carry an N-linked (GlcNAc...) asparagine glycan.

Belongs to the IL-4/IL-13 family.

It is found in the secreted. In terms of biological role, participates in at least several B-cell activation processes as well as of other cell types. It is a costimulator of DNA-synthesis. It induces the expression of class II MHC molecules on resting B-cells. It enhances both secretion and cell surface expression of IgE and IgG1. It also regulates the expression of the low affinity Fc receptor for IgE (CD23) on both lymphocytes and monocytes. Positively regulates IL31RA expression in macrophages. Stimulates autophagy in dendritic cells by interfering with mTORC1 signaling and through the induction of RUFY4. The protein is Interleukin-4 (IL4) of Ovis aries (Sheep).